The sequence spans 601 residues: DNA ligase (601 aa).

Position 258 (D258) interacts with ATP. K260 serves as the catalytic N6-AMP-lysine intermediate. The ATP site is built by R265, R280, E310, F350, R427, and K433. Positions 568–601 (DKSPEDATTTDEILEMYNKQPKKKIESPPIDESV) are disordered.

It belongs to the ATP-dependent DNA ligase family. The cofactor is Mg(2+).

It catalyses the reaction ATP + (deoxyribonucleotide)n-3'-hydroxyl + 5'-phospho-(deoxyribonucleotide)m = (deoxyribonucleotide)n+m + AMP + diphosphate.. Functionally, DNA ligase that seals nicks in double-stranded DNA during DNA replication, DNA recombination and DNA repair. The chain is DNA ligase from Saccharolobus islandicus (strain Y.N.15.51 / Yellowstone #2) (Sulfolobus islandicus).